The following is a 927-amino-acid chain: Isoleucine--tRNA ligase (927 aa).

The 'HIGH' region signature appears at Pro57–His67. Residue Glu553 coordinates L-isoleucyl-5'-AMP. Positions Lys594–Ser598 match the 'KMSKS' region motif. Lys597 contributes to the ATP binding site. 4 residues coordinate Zn(2+): Cys886, Cys889, Cys906, and Cys909.

Belongs to the class-I aminoacyl-tRNA synthetase family. IleS type 1 subfamily. As to quaternary structure, monomer. The cofactor is Zn(2+).

Its subcellular location is the cytoplasm. It carries out the reaction tRNA(Ile) + L-isoleucine + ATP = L-isoleucyl-tRNA(Ile) + AMP + diphosphate. In terms of biological role, catalyzes the attachment of isoleucine to tRNA(Ile). As IleRS can inadvertently accommodate and process structurally similar amino acids such as valine, to avoid such errors it has two additional distinct tRNA(Ile)-dependent editing activities. One activity is designated as 'pretransfer' editing and involves the hydrolysis of activated Val-AMP. The other activity is designated 'posttransfer' editing and involves deacylation of mischarged Val-tRNA(Ile). The polypeptide is Isoleucine--tRNA ligase (Lactobacillus acidophilus (strain ATCC 700396 / NCK56 / N2 / NCFM)).